A 230-amino-acid polypeptide reads, in one-letter code: Protein CWC15 homolog B (230 aa).

A disordered region spans residues 1 to 126 (MTTAARPTFE…DEDSDDDTAA (126 aa)). The span at 22-34 (DLSQLSKQYSSRD) shows a compositional bias: polar residues. The segment covering 52–84 (EEVRSRDFRRELEERERVAVRDKNRDRPTREHT) has biased composition (basic and acidic residues). Acidic residues predominate over residues 102 to 124 (DADDPLTDEDADEDSDEDSDDDT). Residues 121 to 165 (DDDTAALLAELEKIKKERAEEQVRKELEQKAEEERIRMENILSGN) adopt a coiled-coil conformation.

Belongs to the CWC15 family. In terms of assembly, identified in the spliceosome C complex. Component of the minor spliceosome, which splices U12-type introns.

Its subcellular location is the nucleus. Involved in pre-mRNA splicing as component of the spliceosome. This is Protein CWC15 homolog B (cwc15-b) from Xenopus laevis (African clawed frog).